Reading from the N-terminus, the 319-residue chain is Formimidoylglutamase (319 aa).

Residues histidine 131, aspartate 154, histidine 156, aspartate 158, cysteine 248, and aspartate 250 each coordinate Mn(2+).

Belongs to the arginase family. Requires Mn(2+) as cofactor.

It carries out the reaction N-formimidoyl-L-glutamate + H2O = formamide + L-glutamate. The protein operates within amino-acid degradation; L-histidine degradation into L-glutamate; L-glutamate from N-formimidoyl-L-glutamate (hydrolase route): step 1/1. Catalyzes the conversion of N-formimidoyl-L-glutamate to L-glutamate and formamide. This is Formimidoylglutamase from Legionella pneumophila (strain Lens).